Reading from the N-terminus, the 245-residue chain is 1-(5-phosphoribosyl)-5-[(5-phosphoribosylamino)methylideneamino] imidazole-4-carboxamide isomerase (245 aa).

Asp7 (proton acceptor) is an active-site residue. Catalysis depends on Asp129, which acts as the Proton donor.

This sequence belongs to the HisA/HisF family.

The protein localises to the cytoplasm. It carries out the reaction 1-(5-phospho-beta-D-ribosyl)-5-[(5-phospho-beta-D-ribosylamino)methylideneamino]imidazole-4-carboxamide = 5-[(5-phospho-1-deoxy-D-ribulos-1-ylimino)methylamino]-1-(5-phospho-beta-D-ribosyl)imidazole-4-carboxamide. The protein operates within amino-acid biosynthesis; L-histidine biosynthesis; L-histidine from 5-phospho-alpha-D-ribose 1-diphosphate: step 4/9. The chain is 1-(5-phosphoribosyl)-5-[(5-phosphoribosylamino)methylideneamino] imidazole-4-carboxamide isomerase from Shewanella pealeana (strain ATCC 700345 / ANG-SQ1).